We begin with the raw amino-acid sequence, 62 residues long: Conotoxin reg3.5 (62 aa).

The first 22 residues, 1–22, serve as a signal peptide directing secretion; that stretch reads MMFKLGVLLTICLLLFPLTGTA. Positions 23 to 49 are excised as a propeptide; it reads LDGDQLAEHMLDISSGINDRWFDPVRK. Cystine bridges form between C50–C60, C51–C58, and C56–C61.

It belongs to the conotoxin M superfamily. As to expression, expressed by the venom duct.

It is found in the secreted. The sequence is that of Conotoxin reg3.5 from Conus regius (Crown cone).